Reading from the N-terminus, the 360-residue chain is MTTWVIKIGTSLLRGNDKYTTFDVINDYCSYISKAQRNGDKIILVSSGAVGLGCHQMRFKTRPKEIISLQASAAIGQLHLMALYEKAMSSFGYKVAQILLTRSELGSRNSYNSASQTLKRLLEWDVIPIVNENDITSDEELKYGDNDTLSALVATAISADQLILLTDIDHLYSSDPKINSKAKPIKDINNSKELNNLELANEQTSWGTGGIKTKLTAAKIATESGIKVQLADGRDPKILGELLDGKKIGTVFHPNPNPIGNRKSWLAHAIKPVGEIHLDDGASEAIKNKGASLLLVGVKKVSGDFIANQPVKVINTEGEEFAKGICSMSSDAIKIGINSRSETTGSPLVIHRDVLVLTSE.

ATP is bound at residue Lys7. Substrate contacts are provided by Ser47, Asp134, and Asn146. ATP is bound by residues 166-167 (TD) and 208-214 (TGGIKTK). Residues 273–344 (VGEIHLDDGA…IGINSRSETT (72 aa)) enclose the PUA domain.

This sequence belongs to the glutamate 5-kinase family.

Its subcellular location is the cytoplasm. The enzyme catalyses L-glutamate + ATP = L-glutamyl 5-phosphate + ADP. The protein operates within amino-acid biosynthesis; L-proline biosynthesis; L-glutamate 5-semialdehyde from L-glutamate: step 1/2. Functionally, catalyzes the transfer of a phosphate group to glutamate to form L-glutamate 5-phosphate. In Prochlorococcus marinus (strain NATL2A), this protein is Glutamate 5-kinase.